The following is a 201-amino-acid chain: UPF0301 protein RHECIAT_CH0001061 (201 aa).

Belongs to the UPF0301 (AlgH) family.

This is UPF0301 protein RHECIAT_CH0001061 from Rhizobium etli (strain CIAT 652).